Reading from the N-terminus, the 201-residue chain is Heat shock protein beta-1 (201 aa).

Arg-12 carries the omega-N-methylarginine modification. Ser-15 bears the Phosphoserine; by MAPKAPK2 and MAPKAPK3 mark. A Phosphoserine modification is found at Ser-27. Positions 68–201 (AYNRALSRQL…AGKSEQPENK (134 aa)) are interaction with TGFB1I1. Residues 72–180 (ALSRQLSSGV…QSAEITIPVT (109 aa)) enclose the sHSP domain. 2 positions are modified to phosphoserine; by MAPKAPK2, MAPKAPK3 and MAPKAPK5: Ser-74 and Ser-78. Residues Ser-79, Ser-82, and Ser-94 each carry the phosphoserine modification. An N6-acetyllysine modification is found at Lys-119. The residue at position 170 (Thr-170) is a Phosphothreonine. A phosphoserine mark is found at Ser-172 and Ser-195.

It belongs to the small heat shock protein (HSP20) family. In terms of assembly, homooligomer. Homodimer; becomes monomeric upon activation. Heterooligomer; with HSPB6. Associates with alpha- and beta-tubulin. Interacts with TGFB1I1. Interacts with CRYAB. Interacts with HSPB8. Interacts with HSPBAP1. Phosphorylated upon exposure to protein kinase C activators and heat shock. Phosphorylation by MAPKAPK2 and MAPKAPK3 in response to stress dissociates HSPB1 from large small heat-shock protein (sHsps) oligomers and impairs its chaperone activity and ability to protect against oxidative stress effectively. Phosphorylation by MAPKAPK5 in response to PKA stimulation induces F-actin rearrangement.

Its subcellular location is the cytoplasm. The protein resides in the nucleus. It is found in the cytoskeleton. It localises to the spindle. In terms of biological role, small heat shock protein which functions as a molecular chaperone probably maintaining denatured proteins in a folding-competent state. Plays a role in stress resistance and actin organization. Through its molecular chaperone activity may regulate numerous biological processes including the phosphorylation and the axonal transport of neurofilament proteins. This chain is Heat shock protein beta-1 (HSPB1), found in Bos taurus (Bovine).